Consider the following 89-residue polypeptide: Large ribosomal subunit protein bL27 (89 aa).

The interval 1 to 26 (MATKKAGGSSKNGRDSAGRRLGLKKT) is disordered.

Belongs to the bacterial ribosomal protein bL27 family.

The chain is Large ribosomal subunit protein bL27 from Orientia tsutsugamushi (strain Boryong) (Rickettsia tsutsugamushi).